The following is a 354-amino-acid chain: Uroporphyrinogen decarboxylase (354 aa).

Substrate-binding positions include 25–29, D75, Y152, T207, and H330; that span reads RQAGR.

Belongs to the uroporphyrinogen decarboxylase family. In terms of assembly, homodimer.

Its subcellular location is the cytoplasm. The catalysed reaction is uroporphyrinogen III + 4 H(+) = coproporphyrinogen III + 4 CO2. Its pathway is porphyrin-containing compound metabolism; protoporphyrin-IX biosynthesis; coproporphyrinogen-III from 5-aminolevulinate: step 4/4. Catalyzes the decarboxylation of four acetate groups of uroporphyrinogen-III to yield coproporphyrinogen-III. The polypeptide is Uroporphyrinogen decarboxylase (Xanthomonas oryzae pv. oryzae (strain MAFF 311018)).